A 405-amino-acid polypeptide reads, in one-letter code: MDTDKLISEAESHFSQGNHAEAVAKLTSAAQSNPNDEQMSTIESLIQKIAGYVMDNRSGGSDASQDRAAGGGSSFMNTLMADSKGSSQTQLGKLALLATVMTHSSNKGSSNRGFDVGTVMSMLSGSGGGSQSMGASGLAALASQFFKSGNNSQGQGQGQGQGQGQGQGQGQGSFTALASLASSFMNSNNNNQQGQNQSSGGSSFGALASMASSFMHSNNNQNSNNSQQGYNQSYQNGNQNSQGYNNQQYQGGNGGYQQQQGQSGGAFSSLASMAQSYLGGGQTQSNQQQYNQQGQNNQQQYQQQGQNYQHQQQGQQQQQGHSSSFSALASMASSYLGNNSNSNSSYGGQQQANEYGRPQQNGQQQSNEYGRPQYGGNQNSNGQHESFNFSGNFSQQNNNGNQNRY.

Residues K5 and K84 each participate in a glycyl lysine isopeptide (Lys-Gly) (interchain with G-Cter in ubiquitin) cross-link. The residue at position 143 (S143) is a Phosphoserine. 2 disordered regions span residues 149 to 172 (GNNSQGQGQGQGQGQGQGQGQGQG) and 185 to 405 (MNSN…QNRY). The segment at 153 to 402 (QGQGQGQGQG…FSQQNNNGNQ (250 aa)) is prion domain (PrD). Residues 155–171 (QGQGQGQGQGQGQGQGQ) are compositionally biased toward gly residues. 2 stretches are compositionally biased toward low complexity: residues 185-261 (MNSN…QQQG) and 283-353 (TQSN…QQAN). 2 stretches are compositionally biased toward polar residues: residues 358 to 368 (PQQNGQQQSNE) and 375 to 385 (GGNQNSNGQHE). A compositionally biased stretch (low complexity) spans 386-405 (SFNFSGNFSQQNNNGNQNRY).

It localises to the cytoplasm. It is found in the nucleus. Its function is as follows. Transferable epigenetic modifier which forms a prion responsible for the non-Mendelian trait [PIN+]. The native function of the soluble protein is unknown. This Saccharomyces cerevisiae (strain ATCC 204508 / S288c) (Baker's yeast) protein is [PIN+] prion protein RNQ1 (RNQ1).